Here is a 468-residue protein sequence, read N- to C-terminus: 6-phospho-beta-galactosidase (468 aa).

5 residues coordinate D-galactose 6-phosphate: Q19, H116, N159, E160, and N297. Catalysis depends on E160, which acts as the Proton donor. E375 serves as the catalytic Nucleophile. Positions 428, 429, 435, and 437 each coordinate D-galactose 6-phosphate.

Belongs to the glycosyl hydrolase 1 family.

It carries out the reaction a 6-phospho-beta-D-galactoside + H2O = D-galactose 6-phosphate + an alcohol. It functions in the pathway carbohydrate metabolism; lactose degradation; D-galactose 6-phosphate and beta-D-glucose from lactose 6-phosphate: step 1/1. This Streptococcus pyogenes serotype M5 (strain Manfredo) protein is 6-phospho-beta-galactosidase.